Reading from the N-terminus, the 601-residue chain is ATP-dependent lipid A-core flippase (601 aa).

4 consecutive transmembrane segments (helical) span residues 27–47 (IGLF…QPML), 83–103 (LLIV…NYFL), 174–194 (LLWM…LIAV), and 267–287 (PLLQ…VLYL). Positions 31–322 (LISIVGFLIF…LSEVSSTIQK (292 aa)) constitute an ABC transmembrane type-1 domain. Residues 354 to 590 (LEVRNLSFTY…NGYYSRLHAM (237 aa)) enclose the ABC transporter domain. ATP is bound at residue 388-395 (GRSGSGKS).

The protein belongs to the ABC transporter superfamily. Lipid exporter (TC 3.A.1.106) family. In terms of assembly, homodimer.

It localises to the cell inner membrane. It catalyses the reaction ATP + H2O + lipid A-core oligosaccharideSide 1 = ADP + phosphate + lipid A-core oligosaccharideSide 2.. In terms of biological role, involved in lipopolysaccharide (LPS) biosynthesis. Translocates lipid A-core from the inner to the outer leaflet of the inner membrane. Transmembrane domains (TMD) form a pore in the inner membrane and the ATP-binding domain (NBD) is responsible for energy generation. This Pseudomonas fluorescens (strain ATCC BAA-477 / NRRL B-23932 / Pf-5) protein is ATP-dependent lipid A-core flippase.